A 450-amino-acid chain; its full sequence is Aspartyl/glutamyl-tRNA(Asn/Gln) amidotransferase subunit B (450 aa).

It belongs to the GatB/GatE family. GatB subfamily. Heterotrimer of A, B and C subunits.

It carries out the reaction L-glutamyl-tRNA(Gln) + L-glutamine + ATP + H2O = L-glutaminyl-tRNA(Gln) + L-glutamate + ADP + phosphate + H(+). The enzyme catalyses L-aspartyl-tRNA(Asn) + L-glutamine + ATP + H2O = L-asparaginyl-tRNA(Asn) + L-glutamate + ADP + phosphate + 2 H(+). Allows the formation of correctly charged Asn-tRNA(Asn) or Gln-tRNA(Gln) through the transamidation of misacylated Asp-tRNA(Asn) or Glu-tRNA(Gln) in organisms which lack either or both of asparaginyl-tRNA or glutaminyl-tRNA synthetases. The reaction takes place in the presence of glutamine and ATP through an activated phospho-Asp-tRNA(Asn) or phospho-Glu-tRNA(Gln). The polypeptide is Aspartyl/glutamyl-tRNA(Asn/Gln) amidotransferase subunit B (Methanobrevibacter smithii (strain ATCC 35061 / DSM 861 / OCM 144 / PS)).